The chain runs to 356 residues: DNA polymerase IV (356 aa).

In terms of domain architecture, UmuC spans 6 to 187 (IIHIDMDYFF…LDIGDFPGVG (182 aa)). 2 residues coordinate Mg(2+): aspartate 10 and aspartate 105. The active site involves glutamate 106.

The protein belongs to the DNA polymerase type-Y family. As to quaternary structure, monomer. The cofactor is Mg(2+).

Its subcellular location is the cytoplasm. The enzyme catalyses DNA(n) + a 2'-deoxyribonucleoside 5'-triphosphate = DNA(n+1) + diphosphate. Poorly processive, error-prone DNA polymerase involved in untargeted mutagenesis. Copies undamaged DNA at stalled replication forks, which arise in vivo from mismatched or misaligned primer ends. These misaligned primers can be extended by PolIV. Exhibits no 3'-5' exonuclease (proofreading) activity. May be involved in translesional synthesis, in conjunction with the beta clamp from PolIII. The chain is DNA polymerase IV from Staphylococcus aureus (strain MRSA252).